The chain runs to 413 residues: Lipoyl synthase, mitochondrial (413 aa).

Residues Met1–Tyr33 constitute a mitochondrion transit peptide. Residues Cys133, Cys138, Cys144, Cys164, Cys168, Cys171, and Ser379 each contribute to the [4Fe-4S] cluster site. Residues Gly147 to Leu368 form the Radical SAM core domain.

This sequence belongs to the radical SAM superfamily. Lipoyl synthase family. It depends on [4Fe-4S] cluster as a cofactor.

Its subcellular location is the mitochondrion. The catalysed reaction is [[Fe-S] cluster scaffold protein carrying a second [4Fe-4S](2+) cluster] + N(6)-octanoyl-L-lysyl-[protein] + 2 oxidized [2Fe-2S]-[ferredoxin] + 2 S-adenosyl-L-methionine + 4 H(+) = [[Fe-S] cluster scaffold protein] + N(6)-[(R)-dihydrolipoyl]-L-lysyl-[protein] + 4 Fe(3+) + 2 hydrogen sulfide + 2 5'-deoxyadenosine + 2 L-methionine + 2 reduced [2Fe-2S]-[ferredoxin]. It participates in protein modification; protein lipoylation via endogenous pathway; protein N(6)-(lipoyl)lysine from octanoyl-[acyl-carrier-protein]: step 2/2. Functionally, catalyzes the radical-mediated insertion of two sulfur atoms into the C-6 and C-8 positions of the octanoyl moiety bound to the lipoyl domains of lipoate-dependent enzymes, thereby converting the octanoylated domains into lipoylated derivatives. This is Lipoyl synthase, mitochondrial from Emericella nidulans (strain FGSC A4 / ATCC 38163 / CBS 112.46 / NRRL 194 / M139) (Aspergillus nidulans).